Reading from the N-terminus, the 500-residue chain is Apolipoprotein N-acyltransferase (500 aa).

6 helical membrane passes run 5 to 25 (VAPF…WIFV), 38 to 58 (LLLL…FWIT), 74 to 94 (LAIT…FGAI), 111 to 131 (ILIG…GPLW), 145 to 165 (AILH…IVSV), and 185 to 205 (LAIA…LYTA). In terms of domain architecture, CN hydrolase spans 215–462 (LKVGIVQGNI…ETIYRRQTQN (248 aa)). Glu-261 acts as the Proton acceptor in catalysis. Lys-318 is a catalytic residue. Cys-369 acts as the Nucleophile in catalysis. The helical transmembrane segment at 469 to 489 (DWFTPLLVGLSFLGWSLNIFW) threads the bilayer.

It belongs to the CN hydrolase family. Apolipoprotein N-acyltransferase subfamily.

It localises to the cell inner membrane. The catalysed reaction is N-terminal S-1,2-diacyl-sn-glyceryl-L-cysteinyl-[lipoprotein] + a glycerophospholipid = N-acyl-S-1,2-diacyl-sn-glyceryl-L-cysteinyl-[lipoprotein] + a 2-acyl-sn-glycero-3-phospholipid + H(+). It participates in protein modification; lipoprotein biosynthesis (N-acyl transfer). Functionally, catalyzes the phospholipid dependent N-acylation of the N-terminal cysteine of apolipoprotein, the last step in lipoprotein maturation. The chain is Apolipoprotein N-acyltransferase from Nostoc sp. (strain PCC 7120 / SAG 25.82 / UTEX 2576).